A 1766-amino-acid chain; its full sequence is E3 ubiquitin-protein ligase listerin (1766 aa).

Residues 1-11 show a composition bias toward basic residues; that stretch reads MGGKNKQRTKG. The tract at residues 1–20 is disordered; that stretch reads MGGKNKQRTKGNVRPSSSGR. HEAT repeat units follow at residues 100–138, 193–231, 292–329, 335–372, and 512–549; these read KGVL…KVKK, VLQD…SLLA, AEAP…TIED, NARK…KVPP, and EKTL…DEDE. Positions 529–567 are disordered; sequence KTATKPNNRKSLKVKFSDEDESERNTENGKITEVRSNSD. The segment covering 551–566 has biased composition (basic and acidic residues); it reads ERNTENGKITEVRSNS. HEAT repeat units lie at residues 606-644, 672-710, 916-953, 1184-1227, 1314-1355, and 1406-1447; these read EQHL…ESQE, KDMH…KWIV, QVLI…NRTE, HLLP…MIRY, GIHN…YISK, and SKLM…TQEL. An RING-type zinc finger spans residues 1715–1762; sequence CMICFSVIHGSNYSLPKKACRTCKKKFHSACLYKWFTSSNKSTCPLCR.

Belongs to the LTN1 family. In terms of assembly, component of the ribosome quality control complex (RQC), composed of at least the E3 ubiquitin ligase LTN1 and NEMF associated with the 60S ribosomal subunit. The complex probably also contains TCF25 as well as VCP/p97 and its ubiquitin-binding cofactors.

It localises to the cytoplasm. The protein resides in the cytosol. It catalyses the reaction S-ubiquitinyl-[E2 ubiquitin-conjugating enzyme]-L-cysteine + [acceptor protein]-L-lysine = [E2 ubiquitin-conjugating enzyme]-L-cysteine + N(6)-ubiquitinyl-[acceptor protein]-L-lysine.. The protein operates within protein modification; protein ubiquitination. Its function is as follows. E3 ubiquitin-protein ligase component of the ribosome quality control complex (RQC), a ribosome-associated complex that mediates ubiquitination and extraction of incompletely synthesized nascent chains for proteasomal degradation. Within the RQC complex, LTN1 is recruited to stalled 60S ribosomal subunits by NEMF and mediates ubiquitination of stalled nascent chains. Ubiquitination leads to VCP/p97 recruitment for extraction and degradation of the incomplete translation product. This is E3 ubiquitin-protein ligase listerin (LTN1) from Gallus gallus (Chicken).